The chain runs to 121 residues: Large ribosomal subunit protein eL18 (121 aa).

Belongs to the eukaryotic ribosomal protein eL18 family.

This is Large ribosomal subunit protein eL18 from Methanothermobacter thermautotrophicus (strain ATCC 29096 / DSM 1053 / JCM 10044 / NBRC 100330 / Delta H) (Methanobacterium thermoautotrophicum).